The sequence spans 609 residues: MANMIDKIDLKSQGSSNLSGEMTNHQKVGTLYKRLLLQVKHLWHFLLLAAIGSIFFSAADASMIYLINPILNYGFGPGGGITKQSATILMLMGVGMVGLLALRSVGSFVSQYFIGSLGQKVVYKFRKDIYKRLMDLPASFFDKHSTGQIISRLLYNVDQVIEATSTAIITVVQDGTFVIGLIVVMFVSSWQLSLFLIVVGPFLGLFISIINKKFRNLSRNTQSSMGNVTHTAEETIRNYKEIRIFGAQQKQQNKFFKNLDYTYSQQIRTIALDALTSPVIQIIASLVLAFSLFTIAIFGTNEGDGSSWLTAGSFASFFAAAAAILKPIKNLTKVNVVIQKAVAATEDIFYILDYPAEKETGSKELAKVDGNVTIKDLSFAFGEHKVLSGVSVDIKAGQTVAFVGKSGSGKTTLTSIISRFYTQHEGEILLDGVDTRELTLENLRSHLSIVSQNVHLFDDTVYNNIAFGLSREVSEEEVIDALKRANAYEFVQELSDGINTNIGNNGSKLSGGQRQRISIARALLKNAPVLIFDEATSALDNESERVVQQALESLTKSCTTIVIAHRLSTVENADKIVVMDGGRVVESGKHQELLEQGGLYTRLYQSGLQ.

Transmembrane regions (helical) follow at residues 47–67, 88–108, 167–187, 190–210, 279–299, and 305–325; these read LLAA…IYLI, ILML…VGSF, AIIT…VMFV, WQLS…ISII, VIQI…AIFG, and GSSW…AAIL. One can recognise an ABC transmembrane type-1 domain in the interval 47–340; it reads LLAAIGSIFF…LTKVNVVIQK (294 aa). The ABC transporter domain maps to 372-606; the sequence is VTIKDLSFAF…GGLYTRLYQS (235 aa). Position 404-411 (404-411) interacts with ATP; the sequence is GKSGSGKT.

Belongs to the ABC transporter superfamily. Lipid exporter (TC 3.A.1.106) family. In terms of assembly, homodimer.

Its subcellular location is the cell inner membrane. The enzyme catalyses ATP + H2O + lipid A-core oligosaccharideSide 1 = ADP + phosphate + lipid A-core oligosaccharideSide 2.. Functionally, involved in lipopolysaccharide (LPS) biosynthesis. Translocates lipid A-core from the inner to the outer leaflet of the inner membrane. Transmembrane domains (TMD) form a pore in the inner membrane and the ATP-binding domain (NBD) is responsible for energy generation. The protein is ATP-dependent lipid A-core flippase of Francisella tularensis subsp. tularensis (strain FSC 198).